We begin with the raw amino-acid sequence, 207 residues long: Uracil phosphoribosyltransferase (207 aa).

Residues R77, R102, and 129–137 (DPMLATGGS) each bind 5-phospho-alpha-D-ribose 1-diphosphate. Residues I192 and 197 to 199 (GDA) contribute to the uracil site. Position 198 (D198) interacts with 5-phospho-alpha-D-ribose 1-diphosphate.

This sequence belongs to the UPRTase family. Mg(2+) serves as cofactor.

The enzyme catalyses UMP + diphosphate = 5-phospho-alpha-D-ribose 1-diphosphate + uracil. It functions in the pathway pyrimidine metabolism; UMP biosynthesis via salvage pathway; UMP from uracil: step 1/1. With respect to regulation, allosterically activated by GTP. Catalyzes the conversion of uracil and 5-phospho-alpha-D-ribose 1-diphosphate (PRPP) to UMP and diphosphate. The chain is Uracil phosphoribosyltransferase from Dictyoglomus turgidum (strain DSM 6724 / Z-1310).